Reading from the N-terminus, the 416-residue chain is 3-isopropylmalate dehydratase large subunit (416 aa).

3 residues coordinate [4Fe-4S] cluster: cysteine 299, cysteine 357, and cysteine 360.

Belongs to the aconitase/IPM isomerase family. LeuC type 2 subfamily. As to quaternary structure, heterodimer of LeuC and LeuD. Requires [4Fe-4S] cluster as cofactor.

It carries out the reaction (2R,3S)-3-isopropylmalate = (2S)-2-isopropylmalate. Its pathway is amino-acid biosynthesis; L-leucine biosynthesis; L-leucine from 3-methyl-2-oxobutanoate: step 2/4. Functionally, catalyzes the isomerization between 2-isopropylmalate and 3-isopropylmalate, via the formation of 2-isopropylmaleate. The chain is 3-isopropylmalate dehydratase large subunit from Saccharolobus solfataricus (strain ATCC 35092 / DSM 1617 / JCM 11322 / P2) (Sulfolobus solfataricus).